We begin with the raw amino-acid sequence, 243 residues long: Zinc import ATP-binding protein ZnuC (243 aa).

The region spanning 8-225 (LNLSNVSYYI…SEFQKLFGHH (218 aa)) is the ABC transporter domain. 40-47 (GPNGAGKS) serves as a coordination point for ATP.

It belongs to the ABC transporter superfamily. Zinc importer (TC 3.A.1.15.5) family. The complex is composed of two ATP-binding proteins (ZnuC), two transmembrane proteins (ZnuB) and a solute-binding protein (ZnuA).

The protein resides in the cell inner membrane. It carries out the reaction Zn(2+)(out) + ATP(in) + H2O(in) = Zn(2+)(in) + ADP(in) + phosphate(in) + H(+)(in). Functionally, part of the ABC transporter complex ZnuABC involved in zinc import. Responsible for energy coupling to the transport system. The chain is Zinc import ATP-binding protein ZnuC from Psychrobacter arcticus (strain DSM 17307 / VKM B-2377 / 273-4).